Reading from the N-terminus, the 104-residue chain is UPF0045 protein YqgV (104 aa).

This sequence belongs to the UPF0045 family.

In Bacillus subtilis (strain 168), this protein is UPF0045 protein YqgV (yqgV).